A 441-amino-acid chain; its full sequence is Serine--tRNA ligase (441 aa).

An L-serine-binding site is contributed by 250-252; that stretch reads TSE. Residues 281-283 and Val-297 each bind ATP; that span reads RRE. Glu-304 provides a ligand contact to L-serine. 368–371 serves as a coordination point for ATP; the sequence is EIVS. Thr-402 is an L-serine binding site.

It belongs to the class-II aminoacyl-tRNA synthetase family. Type-1 seryl-tRNA synthetase subfamily. As to quaternary structure, homodimer. The tRNA molecule binds across the dimer.

The protein localises to the cytoplasm. It carries out the reaction tRNA(Ser) + L-serine + ATP = L-seryl-tRNA(Ser) + AMP + diphosphate + H(+). It catalyses the reaction tRNA(Sec) + L-serine + ATP = L-seryl-tRNA(Sec) + AMP + diphosphate + H(+). Its pathway is aminoacyl-tRNA biosynthesis; selenocysteinyl-tRNA(Sec) biosynthesis; L-seryl-tRNA(Sec) from L-serine and tRNA(Sec): step 1/1. Catalyzes the attachment of serine to tRNA(Ser). Is also able to aminoacylate tRNA(Sec) with serine, to form the misacylated tRNA L-seryl-tRNA(Sec), which will be further converted into selenocysteinyl-tRNA(Sec). The protein is Serine--tRNA ligase of Thermoplasma volcanium (strain ATCC 51530 / DSM 4299 / JCM 9571 / NBRC 15438 / GSS1).